The primary structure comprises 236 residues: 2,3,4,5-tetrahydropyridine-2,6-dicarboxylate N-acetyltransferase (236 aa).

This sequence belongs to the transferase hexapeptide repeat family. DapH subfamily.

It carries out the reaction (S)-2,3,4,5-tetrahydrodipicolinate + acetyl-CoA + H2O = L-2-acetamido-6-oxoheptanedioate + CoA. The protein operates within amino-acid biosynthesis; L-lysine biosynthesis via DAP pathway; LL-2,6-diaminopimelate from (S)-tetrahydrodipicolinate (acetylase route): step 1/3. In terms of biological role, catalyzes the transfer of an acetyl group from acetyl-CoA to tetrahydrodipicolinate. The sequence is that of 2,3,4,5-tetrahydropyridine-2,6-dicarboxylate N-acetyltransferase from Clostridium botulinum (strain Okra / Type B1).